Here is a 264-residue protein sequence, read N- to C-terminus: Acyl-[acyl-carrier-protein]--UDP-N-acetylglucosamine O-acyltransferase (264 aa).

Belongs to the transferase hexapeptide repeat family. LpxA subfamily. As to quaternary structure, homotrimer.

It localises to the cytoplasm. The catalysed reaction is a (3R)-hydroxyacyl-[ACP] + UDP-N-acetyl-alpha-D-glucosamine = a UDP-3-O-[(3R)-3-hydroxyacyl]-N-acetyl-alpha-D-glucosamine + holo-[ACP]. It functions in the pathway glycolipid biosynthesis; lipid IV(A) biosynthesis; lipid IV(A) from (3R)-3-hydroxytetradecanoyl-[acyl-carrier-protein] and UDP-N-acetyl-alpha-D-glucosamine: step 1/6. Functionally, involved in the biosynthesis of lipid A, a phosphorylated glycolipid that anchors the lipopolysaccharide to the outer membrane of the cell. The chain is Acyl-[acyl-carrier-protein]--UDP-N-acetylglucosamine O-acyltransferase from Rickettsia rickettsii.